The following is a 296-amino-acid chain: Probable endonuclease 4 (296 aa).

Residues histidine 68, histidine 109, glutamate 144, aspartate 178, histidine 181, histidine 213, aspartate 226, histidine 228, and glutamate 258 each coordinate Zn(2+).

Belongs to the AP endonuclease 2 family. The cofactor is Zn(2+).

The enzyme catalyses Endonucleolytic cleavage to 5'-phosphooligonucleotide end-products.. Endonuclease IV plays a role in DNA repair. It cleaves phosphodiester bonds at apurinic or apyrimidinic (AP) sites, generating a 3'-hydroxyl group and a 5'-terminal sugar phosphate. The polypeptide is Probable endonuclease 4 (Pediococcus pentosaceus (strain ATCC 25745 / CCUG 21536 / LMG 10740 / 183-1w)).